We begin with the raw amino-acid sequence, 478 residues long: Cobyric acid synthase (478 aa).

In terms of domain architecture, GATase cobBQ-type spans 250–437 (QLRVVVPVLP…VHGVFDHPMH (188 aa)). The Nucleophile role is filled by Cys331. His429 is an active-site residue.

It belongs to the CobB/CobQ family. CobQ subfamily.

It functions in the pathway cofactor biosynthesis; adenosylcobalamin biosynthesis. Its function is as follows. Catalyzes amidations at positions B, D, E, and G on adenosylcobyrinic A,C-diamide. NH(2) groups are provided by glutamine, and one molecule of ATP is hydrogenolyzed for each amidation. The chain is Cobyric acid synthase from Xanthomonas euvesicatoria pv. vesicatoria (strain 85-10) (Xanthomonas campestris pv. vesicatoria).